We begin with the raw amino-acid sequence, 409 residues long: Histidine--tRNA ligase (409 aa).

It belongs to the class-II aminoacyl-tRNA synthetase family.

It is found in the cytoplasm. It catalyses the reaction tRNA(His) + L-histidine + ATP = L-histidyl-tRNA(His) + AMP + diphosphate + H(+). The polypeptide is Histidine--tRNA ligase (Methanosphaerula palustris (strain ATCC BAA-1556 / DSM 19958 / E1-9c)).